A 516-amino-acid chain; its full sequence is 7-chloro-L-tryptophan 6-halogenase KtzR (516 aa).

FAD contacts are provided by Gly6, Thr8, Ala9, Glu42, and Ala43. The active site involves Lys71. An FAD-binding site is contributed by Val195. Chloride-binding residues include Thr357 and Gly358. Position 359 (Ile359) interacts with FAD.

It belongs to the flavin-dependent halogenase family. Bacterial tryptophan halogenase subfamily.

It catalyses the reaction 7-chloro-L-tryptophan + FADH2 + chloride + O2 = 6,7-dichloro-L-tryptophan + FAD + 2 H2O. In terms of biological role, involved in the biosynthesis of kutznerides, actinomycete-derived antifungal and antimicrobial cyclic hexadepsipeptides. Together with KtzQ, catalyzes the regiospecific dichlorination of L-tryptophan (L-Trp) to produce 6,7-dichloro-L-tryptophan. KtzR catalyzes the chlorination of 7-chloro-L-tryptophan at C6 position to yield 6,7-dichloro-L-tryptophan. Can also use L-Trp as substrate and form 6-chloro-L-tryptophan, but has a 120-fold preference for 7-chloro-L-tryptophan over L-Trp. Cannot use piperazic acid or gamma,delta-dehydropiperazic acid. This Kutzneria sp. (strain 744) protein is 7-chloro-L-tryptophan 6-halogenase KtzR.